The following is a 461-amino-acid chain: Ornithine decarboxylase (461 aa).

K69 is modified (N6-(pyridoxal phosphate)lysine). Pyridoxal 5'-phosphate contacts are provided by residues S200, G237, and E274–R277. S303 bears the Phosphoserine; by CK2 mark. Residue Y331 to D332 coordinates substrate. The active-site Proton donor; shared with dimeric partner is C360. At C360 the chain carries S-nitrosocysteine. A substrate-binding site is contributed by D361. Y389 lines the pyridoxal 5'-phosphate pocket.

The protein belongs to the Orn/Lys/Arg decarboxylase class-II family. Homodimer. Only the dimer is catalytically active, as the active sites are constructed of residues from both monomers. Does not form a heterodimer with AZIN2. Pyridoxal 5'-phosphate serves as cofactor. In terms of tissue distribution, expressed during testis development in the outer part of the seminiferous tubules.

The enzyme catalyses L-ornithine + H(+) = putrescine + CO2. Its pathway is amine and polyamine biosynthesis; putrescine biosynthesis via L-ornithine pathway; putrescine from L-ornithine: step 1/1. Inhibited by antizymes (AZs) OAZ1, OAZ2 and OAZ3 in response to polyamine levels. AZs inhibit the assembly of the functional homodimer by binding to ODC monomers. Additionally, OAZ1 targets ODC monomers for ubiquitin-independent proteolytic destruction by the 26S proteasome. In terms of biological role, catalyzes the first and rate-limiting step of polyamine biosynthesis that converts ornithine into putrescine, which is the precursor for the polyamines, spermidine and spermine. Polyamines are essential for cell proliferation and are implicated in cellular processes, ranging from DNA replication to apoptosis. This chain is Ornithine decarboxylase (Odc1), found in Mus musculus (Mouse).